The primary structure comprises 348 residues: tRNA N6-adenosine threonylcarbamoyltransferase (348 aa).

His-111 and His-115 together coordinate Fe cation. Residues 134 to 138 (LISGG), Asp-167, Gly-180, and Asn-277 contribute to the substrate site. Asp-305 contributes to the Fe cation binding site.

The protein belongs to the KAE1 / TsaD family. The cofactor is Fe(2+).

It localises to the cytoplasm. The enzyme catalyses L-threonylcarbamoyladenylate + adenosine(37) in tRNA = N(6)-L-threonylcarbamoyladenosine(37) in tRNA + AMP + H(+). In terms of biological role, required for the formation of a threonylcarbamoyl group on adenosine at position 37 (t(6)A37) in tRNAs that read codons beginning with adenine. Is involved in the transfer of the threonylcarbamoyl moiety of threonylcarbamoyl-AMP (TC-AMP) to the N6 group of A37, together with TsaE and TsaB. TsaD likely plays a direct catalytic role in this reaction. This chain is tRNA N6-adenosine threonylcarbamoyltransferase, found in Haemophilus ducreyi (strain 35000HP / ATCC 700724).